Reading from the N-terminus, the 1714-residue chain is uncharacterized protein (1714 aa).

Disordered regions lie at residues 47–70 (SVAG…SDDL) and 584–616 (KKTG…KSKK). ATP contacts are provided by residues 607 to 614 (ATKESGKS) and 806 to 813 (APTSAGKT). Over residues 607–616 (ATKESGKSKK) the composition is skewed to basic and acidic residues. In terms of domain architecture, Helicase ATP-binding spans 793 to 963 (LDSVDRGNSA…WLNSSEQAKS (171 aa)). The DEVH box signature appears at 913-916 (DEVH). Residues 1197–1223 (KRKRDDAEKKKKGDKDEDAGPEKDDDE) are disordered. Basic and acidic residues predominate over residues 1199-1218 (KRDDAEKKKKGDKDEDAGPE). A Helicase C-terminal domain is found at 1237–1391 (ALERFKLRGR…NPPFTVLFLL (155 aa)).

This sequence belongs to the helicase family. SKI2 subfamily.

It is found in the nucleus. This is an uncharacterized protein from Caenorhabditis elegans.